The chain runs to 1339 residues: DNA polymerase alpha catalytic subunit (1339 aa).

Disordered regions lie at residues 1–29 (MEDWVSCRSEEQKRCEEKGQSTFDESEEE) and 60–89 (AKRRKPRKSGKVIATQKCAQPQNQHRHQQK). The segment covering 8–19 (RSEEQKRCEEKG) has biased composition (basic and acidic residues). Cysteine 1179, cysteine 1182, cysteine 1215, cysteine 1218, cysteine 1235, cysteine 1244, cysteine 1274, and cysteine 1289 together coordinate Zn(2+). Residues 1179–1218 (CTHCQLVVPVDPHKYINDMFSSREKPPPTAPFELYVCFNC) form a CysA-type zinc finger. Residues 1244–1274 (CSGGNVASVRALRAQFTYLRAMFDVPQALNC) carry the CysB motif motif.

This sequence belongs to the DNA polymerase type-B family.

Its subcellular location is the nucleus. The catalysed reaction is DNA(n) + a 2'-deoxyribonucleoside 5'-triphosphate = DNA(n+1) + diphosphate. Polymerase alpha in a complex with DNA primase is a replicative polymerase. The chain is DNA polymerase alpha catalytic subunit from Trypanosoma brucei brucei.